Here is a 335-residue protein sequence, read N- to C-terminus: Nod factor export ATP-binding protein I (335 aa).

An ABC transporter domain is found at 37–267 (IDVASVTKSY…KIGCQVIEIY (231 aa)). 69-76 (GPNGAGKS) provides a ligand contact to ATP.

Belongs to the ABC transporter superfamily. Lipooligosaccharide exporter (TC 3.A.1.102) family. The complex is composed of two ATP-binding proteins (NodI) and two transmembrane proteins (NodJ).

It localises to the cell inner membrane. Its function is as follows. Part of the ABC transporter complex NodIJ involved in the export of the nodulation factors (Nod factors), the bacterial signal molecules that induce symbiosis and subsequent nodulation induction. Nod factors are LCO (lipo-chitin oligosaccharide), a modified beta-1,4-linked N-acetylglucosamine oligosaccharide. This subunit is responsible for energy coupling to the transport system. The sequence is that of Nod factor export ATP-binding protein I from Rhizobium meliloti (strain 1021) (Ensifer meliloti).